We begin with the raw amino-acid sequence, 237 residues long: Uridylate kinase (237 aa).

9–12 (KFSG) is an ATP binding site. The tract at residues 17-22 (GEAGYG) is involved in allosteric activation by GTP. Gly-51 contacts UMP. ATP-binding residues include Gly-52 and Arg-56. UMP contacts are provided by residues Asp-72 and 133–140 (TGNPFFTT). ATP contacts are provided by Thr-160, Tyr-166, and Asp-169.

The protein belongs to the UMP kinase family. Homohexamer.

Its subcellular location is the cytoplasm. The enzyme catalyses UMP + ATP = UDP + ADP. Its pathway is pyrimidine metabolism; CTP biosynthesis via de novo pathway; UDP from UMP (UMPK route): step 1/1. Allosterically activated by GTP. Inhibited by UTP. Catalyzes the reversible phosphorylation of UMP to UDP. This chain is Uridylate kinase, found in Sulfurimonas denitrificans (strain ATCC 33889 / DSM 1251) (Thiomicrospira denitrificans (strain ATCC 33889 / DSM 1251)).